We begin with the raw amino-acid sequence, 505 residues long: 2,3-bisphosphoglycerate-independent phosphoglycerate mutase (505 aa).

Mn(2+)-binding residues include Asp-13 and Ser-63. Residue Ser-63 is the Phosphoserine intermediate of the active site. Substrate is bound by residues His-124, 153–154 (RD), Arg-183, Arg-189, 254–257 (RADR), and Lys-330. Positions 396, 400, 437, 438, and 456 each coordinate Mn(2+).

This sequence belongs to the BPG-independent phosphoglycerate mutase family. In terms of assembly, monomer. Requires Mn(2+) as cofactor.

The catalysed reaction is (2R)-2-phosphoglycerate = (2R)-3-phosphoglycerate. It functions in the pathway carbohydrate degradation; glycolysis; pyruvate from D-glyceraldehyde 3-phosphate: step 3/5. In terms of biological role, catalyzes the interconversion of 2-phosphoglycerate and 3-phosphoglycerate. This is 2,3-bisphosphoglycerate-independent phosphoglycerate mutase from Roseobacter denitrificans (strain ATCC 33942 / OCh 114) (Erythrobacter sp. (strain OCh 114)).